Consider the following 129-residue polypeptide: Succinate dehydrogenase subunit 3-1, mitochondrial (129 aa).

Residues 1 to 58 (MEKYHSNSRFAPFRDAPFALRGALGSSGSSFSSIDSLRRSSTLEQARGYTSRPLGAVR) constitute a mitochondrion transit peptide. The span at 25-35 (GSSGSSFSSID) shows a compositional bias: low complexity. The interval 25 to 80 (GSSGSSFSSIDSLRRSSTLEQARGYTSRPLGAVRPKMLPSGCRPLHTSHPLSAPVA) is disordered. Histidine 87 is a binding site for heme. Residues 105 to 127 (IFGAALGAAIISIPLATKFSLMF) form a helical membrane-spanning segment.

As to quaternary structure, component of complex II composed of eight subunits in plants: four classical SDH subunits SDH1, SDH2, SDH3 and SDH4 (a flavoprotein (FP), an iron-sulfur protein (IP), and a cytochrome b composed of a large and a small subunit.), as well as four subunits unknown in mitochondria from bacteria and heterotrophic eukaryotes. It depends on heme as a cofactor.

The protein resides in the mitochondrion inner membrane. It participates in carbohydrate metabolism; tricarboxylic acid cycle. Membrane-anchoring subunit of succinate dehydrogenase (SDH). The protein is Succinate dehydrogenase subunit 3-1, mitochondrial of Oryza sativa subsp. japonica (Rice).